A 1225-amino-acid polypeptide reads, in one-letter code: DNA-directed RNA polymerase subunit beta' (1225 aa).

Zn(2+) contacts are provided by Cys60, Cys62, Cys75, and Cys78. Residues Asp450, Asp452, and Asp454 each coordinate Mg(2+). Zn(2+) is bound by residues Cys818, Cys892, Cys899, and Cys902.

It belongs to the RNA polymerase beta' chain family. In terms of assembly, the RNAP catalytic core consists of 2 alpha, 1 beta, 1 beta' and 1 omega subunit. When a sigma factor is associated with the core the holoenzyme is formed, which can initiate transcription. Requires Mg(2+) as cofactor. It depends on Zn(2+) as a cofactor.

It catalyses the reaction RNA(n) + a ribonucleoside 5'-triphosphate = RNA(n+1) + diphosphate. Its function is as follows. DNA-dependent RNA polymerase catalyzes the transcription of DNA into RNA using the four ribonucleoside triphosphates as substrates. This chain is DNA-directed RNA polymerase subunit beta', found in Streptococcus pneumoniae (strain P1031).